A 299-amino-acid chain; its full sequence is MTDNTRLRIAMQKSGRLSDDSRELLARCGIKINLHTQRLIAMAENMPIDILRVRDDDIPCLVMDGVVDLGIIGENVLEEELLNRRAQGEDPRYFTLRRLDFGGCRLSLATPVDEAWDGPLSLNGKRIATSYPHLLKRYLDQKGISFKSCLLNGSVEVAPRAGLADAICDLVSTGATLEANGLREVEVIYRSKACLIQRDGEMEESKQQLIDKLLTRIQGVIQARESKYIMMHAPTERLDEVIALLPGAERPTILPLAGDQQRVAMHMVSSETLFWETMEKLKALGASSILVLPIEKMME.

It belongs to the ATP phosphoribosyltransferase family. Long subfamily. In terms of assembly, equilibrium between an active dimeric form, an inactive hexameric form and higher aggregates. Interconversion between the various forms is largely reversible and is influenced by the natural substrates and inhibitors of the enzyme. Mg(2+) is required as a cofactor.

The protein localises to the cytoplasm. The catalysed reaction is 1-(5-phospho-beta-D-ribosyl)-ATP + diphosphate = 5-phospho-alpha-D-ribose 1-diphosphate + ATP. It participates in amino-acid biosynthesis; L-histidine biosynthesis; L-histidine from 5-phospho-alpha-D-ribose 1-diphosphate: step 1/9. With respect to regulation, feedback inhibited by histidine. In terms of biological role, catalyzes the condensation of ATP and 5-phosphoribose 1-diphosphate to form N'-(5'-phosphoribosyl)-ATP (PR-ATP). Has a crucial role in the pathway because the rate of histidine biosynthesis seems to be controlled primarily by regulation of HisG enzymatic activity. This Shigella flexneri serotype 5b (strain 8401) protein is ATP phosphoribosyltransferase.